The primary structure comprises 546 residues: Probable Dol-P-Man:Man(7)GlcNAc(2)-PP-Dol alpha-1,6-mannosyltransferase (546 aa).

Transmembrane regions (helical) follow at residues 5–25 (ESIC…YYSY), 67–87 (FIPS…VNPL), 113–133 (FGTL…HLVY), 166–186 (ILVF…MCLI), 200–220 (LLLV…LIDS), 258–278 (LPWL…FVYI), 283–303 (LLIY…HKEW), 305–325 (FIIY…SLCF), and 340–360 (LMFF…LYVF).

The protein belongs to the glycosyltransferase 22 family.

The protein localises to the endoplasmic reticulum membrane. It catalyses the reaction an alpha-D-Man-(1-&gt;2)-alpha-D-Man-(1-&gt;2)-alpha-D-Man-(1-&gt;3)-[alpha-D-Man-(1-&gt;2)-alpha-D-Man-(1-&gt;3)-alpha-D-Man-(1-&gt;6)]-beta-D-Man-(1-&gt;4)-beta-D-GlcNAc-(1-&gt;4)-alpha-D-GlcNAc-diphospho-di-trans,poly-cis-dolichol + a di-trans,poly-cis-dolichyl beta-D-mannosyl phosphate = an alpha-D-Man-(1-&gt;2)-alpha-D-Man-(1-&gt;2)-alpha-D-Man-(1-&gt;3)-[alpha-D-Man-(1-&gt;2)-alpha-D-Man-(1-&gt;3)-[alpha-D-Man-(1-&gt;6)]-alpha-D-Man-(1-&gt;6)]-beta-D-Man-(1-&gt;4)-beta-D-GlcNAc-(1-&gt;4)-alpha-D-GlcNAc-diphospho-di-trans,poly-cis-dolichol + a di-trans,poly-cis-dolichyl phosphate + H(+). It participates in protein modification; protein glycosylation. In terms of biological role, mannosyltransferase that operates in the biosynthetic pathway of dolichol-linked oligosaccharides, the glycan precursors employed in protein asparagine (N)-glycosylation. The assembly of dolichol-linked oligosaccharides begins on the cytosolic side of the endoplasmic reticulum membrane and finishes in its lumen. The sequential addition of sugars to dolichol pyrophosphate produces dolichol-linked oligosaccharides containing fourteen sugars, including two GlcNAcs, nine mannoses and three glucoses. Once assembled, the oligosaccharide is transferred from the lipid to nascent proteins by oligosaccharyltransferases. In the lumen of the endoplasmic reticulum, adds the eighth mannose residue in an alpha-1,6 linkage onto Man(7)GlcNAc(2)-PP-dolichol to produce Man(8)GlcNAc(2)-PP-dolichol. This is Probable Dol-P-Man:Man(7)GlcNAc(2)-PP-Dol alpha-1,6-mannosyltransferase (alg12) from Schizosaccharomyces pombe (strain 972 / ATCC 24843) (Fission yeast).